A 359-amino-acid polypeptide reads, in one-letter code: DNA replication and repair protein RecF (359 aa).

ATP is bound at residue glycine 30–threonine 37.

Belongs to the RecF family.

Its subcellular location is the cytoplasm. The RecF protein is involved in DNA metabolism; it is required for DNA replication and normal SOS inducibility. RecF binds preferentially to single-stranded, linear DNA. It also seems to bind ATP. In Vibrio atlanticus (strain LGP32) (Vibrio splendidus (strain Mel32)), this protein is DNA replication and repair protein RecF.